Consider the following 276-residue polypeptide: MPIKSYRPTTPTRRFQTVVSREDITKQTPEKSLVESKKRSGGRNSTGRVTSRFIGGGAKKAYRVVDFKRDKAGIPAVVAAIEYDPNRSSRIALLNYVDGEKRYILQPDGLKVGMKIMSGPNADILIGNALPLKNIPAGTIVHNIELKPGKGGQMARSAGSQAQLVSREGGLALLKLPSGEIRRVAVECMATVGQVGNVDHENVSLGKAGRKRWMGKTPHNRGVSMNPVDHPHGGGEGKTSGGRHPVTPWGQPTRGFKTRNNKRTDKWIVNRKSKKR.

Disordered regions lie at residues 1-50 (MPIK…GRVT) and 206-276 (GKAG…SKKR). Positions 7–19 (RPTTPTRRFQTVV) are enriched in polar residues. Basic and acidic residues predominate over residues 20 to 38 (SREDITKQTPEKSLVESKK).

The protein belongs to the universal ribosomal protein uL2 family. In terms of assembly, part of the 50S ribosomal subunit. Forms a bridge to the 30S subunit in the 70S ribosome.

Functionally, one of the primary rRNA binding proteins. Required for association of the 30S and 50S subunits to form the 70S ribosome, for tRNA binding and peptide bond formation. It has been suggested to have peptidyltransferase activity; this is somewhat controversial. Makes several contacts with the 16S rRNA in the 70S ribosome. The polypeptide is Large ribosomal subunit protein uL2 (Solibacter usitatus (strain Ellin6076)).